The chain runs to 712 residues: Phosphoribosylformylglycinamidine synthase subunit PurL (712 aa).

Residue His32 is part of the active site. Tyr35 serves as a coordination point for ATP. Glu76 contacts Mg(2+). Substrate-binding positions include 77–80 and Arg99; that span reads SHNH. His78 serves as the catalytic Proton acceptor. Asp100 is a binding site for Mg(2+). Residue Gln223 coordinates substrate. Mg(2+) is bound at residue Asp251. 295-297 provides a ligand contact to substrate; the sequence is ESQ. ATP contacts are provided by Asp470 and Gly507. Asn508 contributes to the Mg(2+) binding site. Substrate is bound at residue Ser510.

It belongs to the FGAMS family. Monomer. Part of the FGAM synthase complex composed of 1 PurL, 1 PurQ and 2 PurS subunits.

Its subcellular location is the cytoplasm. It carries out the reaction N(2)-formyl-N(1)-(5-phospho-beta-D-ribosyl)glycinamide + L-glutamine + ATP + H2O = 2-formamido-N(1)-(5-O-phospho-beta-D-ribosyl)acetamidine + L-glutamate + ADP + phosphate + H(+). The protein operates within purine metabolism; IMP biosynthesis via de novo pathway; 5-amino-1-(5-phospho-D-ribosyl)imidazole from N(2)-formyl-N(1)-(5-phospho-D-ribosyl)glycinamide: step 1/2. In terms of biological role, part of the phosphoribosylformylglycinamidine synthase complex involved in the purines biosynthetic pathway. Catalyzes the ATP-dependent conversion of formylglycinamide ribonucleotide (FGAR) and glutamine to yield formylglycinamidine ribonucleotide (FGAM) and glutamate. The FGAM synthase complex is composed of three subunits. PurQ produces an ammonia molecule by converting glutamine to glutamate. PurL transfers the ammonia molecule to FGAR to form FGAM in an ATP-dependent manner. PurS interacts with PurQ and PurL and is thought to assist in the transfer of the ammonia molecule from PurQ to PurL. This is Phosphoribosylformylglycinamidine synthase subunit PurL from Thermococcus gammatolerans (strain DSM 15229 / JCM 11827 / EJ3).